Reading from the N-terminus, the 598-residue chain is Elongation factor 4 (598 aa).

In terms of domain architecture, tr-type G spans 2–184 (QHIRNFSIIA…AIVARVPAPK (183 aa)). GTP-binding positions include 14-19 (DHGKST) and 131-134 (NKID).

Belongs to the TRAFAC class translation factor GTPase superfamily. Classic translation factor GTPase family. LepA subfamily.

It localises to the cell inner membrane. The enzyme catalyses GTP + H2O = GDP + phosphate + H(+). Functionally, required for accurate and efficient protein synthesis under certain stress conditions. May act as a fidelity factor of the translation reaction, by catalyzing a one-codon backward translocation of tRNAs on improperly translocated ribosomes. Back-translocation proceeds from a post-translocation (POST) complex to a pre-translocation (PRE) complex, thus giving elongation factor G a second chance to translocate the tRNAs correctly. Binds to ribosomes in a GTP-dependent manner. This Azoarcus sp. (strain BH72) protein is Elongation factor 4.